The primary structure comprises 558 residues: Arginine--tRNA ligase (558 aa).

The 'HIGH' region signature appears at 119-129 (ANPDGPLHVGH).

This sequence belongs to the class-I aminoacyl-tRNA synthetase family.

The protein localises to the cytoplasm. It carries out the reaction tRNA(Arg) + L-arginine + ATP = L-arginyl-tRNA(Arg) + AMP + diphosphate. This Methanothrix thermoacetophila (strain DSM 6194 / JCM 14653 / NBRC 101360 / PT) (Methanosaeta thermophila) protein is Arginine--tRNA ligase.